A 223-amino-acid chain; its full sequence is Thiamine-phosphate synthase (223 aa).

4-amino-2-methyl-5-(diphosphooxymethyl)pyrimidine contacts are provided by residues 37 to 41 (QLREK) and Asn69. Residues Asp70 and Asp89 each contribute to the Mg(2+) site. 4-amino-2-methyl-5-(diphosphooxymethyl)pyrimidine is bound at residue Ser108. 2-[(2R,5Z)-2-carboxy-4-methylthiazol-5(2H)-ylidene]ethyl phosphate is bound at residue 134-136 (TGT). A 4-amino-2-methyl-5-(diphosphooxymethyl)pyrimidine-binding site is contributed by Lys137. 2-[(2R,5Z)-2-carboxy-4-methylthiazol-5(2H)-ylidene]ethyl phosphate is bound by residues Gly167 and 187-188 (VS). Residues 197–223 (AAATRKLQGSVDTASVESQLPSEEPSA) form a disordered region. Over residues 206–217 (SVDTASVESQLP) the composition is skewed to polar residues.

Belongs to the thiamine-phosphate synthase family. Mg(2+) is required as a cofactor.

It carries out the reaction 2-[(2R,5Z)-2-carboxy-4-methylthiazol-5(2H)-ylidene]ethyl phosphate + 4-amino-2-methyl-5-(diphosphooxymethyl)pyrimidine + 2 H(+) = thiamine phosphate + CO2 + diphosphate. The enzyme catalyses 2-(2-carboxy-4-methylthiazol-5-yl)ethyl phosphate + 4-amino-2-methyl-5-(diphosphooxymethyl)pyrimidine + 2 H(+) = thiamine phosphate + CO2 + diphosphate. The catalysed reaction is 4-methyl-5-(2-phosphooxyethyl)-thiazole + 4-amino-2-methyl-5-(diphosphooxymethyl)pyrimidine + H(+) = thiamine phosphate + diphosphate. The protein operates within cofactor biosynthesis; thiamine diphosphate biosynthesis; thiamine phosphate from 4-amino-2-methyl-5-diphosphomethylpyrimidine and 4-methyl-5-(2-phosphoethyl)-thiazole: step 1/1. Condenses 4-methyl-5-(beta-hydroxyethyl)thiazole monophosphate (THZ-P) and 2-methyl-4-amino-5-hydroxymethyl pyrimidine pyrophosphate (HMP-PP) to form thiamine monophosphate (TMP). This chain is Thiamine-phosphate synthase, found in Haloquadratum walsbyi (strain DSM 16790 / HBSQ001).